We begin with the raw amino-acid sequence, 3010 residues long: Genome polyprotein (3010 aa).

Residue Ser2 is modified to N-acetylserine; by host. Positions 2–23 are interaction with STAT1; that stretch reads STNPKPQRKTKRNTYRRPQDVK. The tract at residues 2-58 is interaction with EIF2AK2/PKR; that stretch reads STNPKPQRKTKRNTYRRPQDVKFPGGGQIVGGVYVLPRRGPTLGVRATRKTSERSQP. Positions 2 to 59 are interaction with DDX3X; that stretch reads STNPKPQRKTKRNTYRRPQDVKFPGGGQIVGGVYVLPRRGPTLGVRATRKTSERSQPR. The segment at 2-75 is disordered; the sequence is STNPKPQRKT…PKARRPEGRA (74 aa). Residues 2–168 are Cytoplasmic-facing; it reads STNPKPQRKT…EDGVNYATGN (167 aa). Short sequence motifs (nuclear localization signal) lie at residues 5-13 and 38-43; these read PKPQRKTKR and PRRGPT. Residues 7 to 16 are compositionally biased toward basic residues; the sequence is PQRKTKRNTY. Ser53 is modified (phosphoserine; by host). Short sequence motifs (nuclear localization signal) lie at residues 58-64 and 66-71; these read PRGRRQP and PKARRP. Over residues 58–68 the composition is skewed to basic residues; sequence PRGRRQPIPKA. Ser99 bears the Phosphoserine; by host mark. The tract at residues 112–152 is important for endoplasmic reticulum and mitochondrial localization; sequence PRRRSRNLGKVIDTLTCGFADLMGYIPLVGAPLGGAARALA. A Phosphoserine; by host PKA modification is found at Ser116. An interaction with APOA2 region spans residues 122-173; that stretch reads VIDTLTCGFADLMGYIPLVGAPLGGAARALAHGVRVLEDGVNYATGNLPGCS. The tract at residues 164 to 167 is important for lipid droplets localization; the sequence is YATG. A helical transmembrane segment spans residues 169-189; that stretch reads LPGCSFSIFLLALLSCLTIPA. Positions 178–191 are cleaved as a propeptide — ER anchor for the core protein, removed in mature form by host signal peptidase; it reads LLALLSCLTIPASA. Over 190–358 the chain is Lumenal; that stretch reads SAYQVRNASG…AGAHWGVLAG (169 aa). 4 N-linked (GlcNAc...) asparagine; by host glycosylation sites follow: Asn196, Asn209, Asn234, and Asn250. An important for fusion region spans residues 265–296; sequence LVGAAAFCSAMYVGDLCGSVFLVSQLFTFSPR. N-linked (GlcNAc...) asparagine; by host glycosylation is present at Asn305. A helical transmembrane segment spans residues 359–379; that stretch reads LAYYSMVGNWAKVLIVMLLFA. Residues 380 to 725 lie on the Lumenal side of the membrane; it reads GVDGVTYTTG…WEYIVLLFLL (346 aa). The segment at 385-411 is HVR1; the sequence is TYTTGGSQARHTQSVTSFFTQGPAQRI. 4 N-linked (GlcNAc...) (high mannose) asparagine; by host glycosylation sites follow: Asn417, Asn423, Asn430, and Asn448. Intrachain disulfides connect Cys429–Cys552, Cys452–Cys459, Cys486–Cys494, and Cys503–Cys508. The HVR2 stretch occupies residues 474 to 479; the sequence is YTEPRD. The tract at residues 480 to 493 is CD81-binding 1; the sequence is LDQRPYCWHYAPRQ. An N-linked (GlcNAc...) (high mannose) asparagine; by host glycan is attached at Asn532. N-linked (GlcNAc...) asparagine; by host glycosylation occurs at Asn540. The interval 544-551 is CD81-binding 2; that stretch reads PPQGNWFG. An N-linked (GlcNAc...) (high mannose) asparagine; by host glycan is attached at Asn556. An intrachain disulfide couples Cys564 to Cys569. An N-linked (GlcNAc...) (high mannose) asparagine; by host glycan is attached at Asn576. Intrachain disulfides connect Cys581-Cys585, Cys597-Cys620, and Cys607-Cys644. N-linked (GlcNAc...) (high mannose) asparagine; by host glycans are attached at residues Asn623 and Asn645. Residues Cys652 and Cys677 are joined by a disulfide bond. A PKR/eIF2-alpha phosphorylation homology domain (PePHD) region spans residues 660–671; that stretch reads SELSPLLLSTTE. Residues 726 to 746 form a helical membrane-spanning segment; the sequence is LADARVCACLWMMLLIAQAEA. Over 747–757 the chain is Lumenal; sequence ALENLVVLNAA. Residues 758–778 traverse the membrane as a helical segment; that stretch reads SLAGADGILSFLVFFCAAWYI. At 779 to 781 the chain is on the cytoplasmic side; it reads KGR. The chain crosses the membrane as a helical span at residues 782–803; that stretch reads LVPGAAYALYGVWPLLLLLLAL. Topologically, residues 804–813 are lumenal; it reads PPRAYAMDRE. Residues 814–834 traverse the membrane as a helical segment; sequence MAASCGGVVFVGLILLTLSPH. Over 835-838 the chain is Cytoplasmic; it reads YKVF. The helical transmembrane segment at 839 to 859 threads the bilayer; sequence LARLIWWLQYFITRAEAHLCV. Over 860 to 881 the chain is Lumenal; it reads WVPPLNVRGGRDAIILLTCAAH. A helical membrane pass occupies residues 882-902; it reads PELIFDITKLLLAILGPLMVL. The Peptidase C18 domain maps to 903–1026; that stretch reads QAAITAMPYF…SIEGQGWRLL (124 aa). The Cytoplasmic portion of the chain corresponds to 903 to 1657; it reads QAAITAMPYF…CMSADLEVVT (755 aa). Residues 904–1206 are protease NS2-3; the sequence is AAITAMPYFV…PVESMETTMR (303 aa). The S-palmitoyl cysteine; by host moiety is linked to residue Cys922. Residues 929-949 form an interaction with host SCPS1 region; the sequence is AGGHYVQMAFMKLAALTGTYV. Active-site for protease NS2 activity; shared with dimeric partner residues include His952, Glu972, and Cys993. The region spanning 1027-1208 is the Peptidase S29 domain; that stretch reads APITAYAQQT…ESMETTMRSP (182 aa). Catalysis depends on charge relay system; for serine protease NS3 activity residues His1083 and Asp1107. 2 residues coordinate Zn(2+): Cys1123 and Cys1125. Residue Ser1165 is the Charge relay system; for serine protease NS3 activity of the active site. Zn(2+)-binding residues include Cys1171 and His1175. The 153-residue stretch at 1217–1369 folds into the Helicase ATP-binding domain; it reads PAVPQTFQVA…PNIEEVALSN (153 aa). 1230–1237 is an ATP binding site; sequence APTGSGKS. Mg(2+) contacts are provided by Ser1237 and Glu1317. Positions 1316 to 1319 match the DECH box motif; that stretch reads DECH. Positions 1486 to 1497 are RNA-binding; sequence QRRGRTGRGRGG. Residues 1658 to 1678 form a helical membrane-spanning segment; the sequence is STWVLVGGVLAALAAYCLTTG. Positions 1679–1690 are NS3-binding; sequence SVVIVGRIILSG. The Cytoplasmic portion of the chain corresponds to 1679–1805; it reads SVVIVGRIIL…SITSPLTTQN (127 aa). A helical membrane pass occupies residues 1806–1824; the sequence is TLLFNILGGWVAAQLAPPS. Topologically, residues 1825–1828 are lumenal; the sequence is AASA. The helical transmembrane segment at 1829–1849 threads the bilayer; that stretch reads FVGAGIAGAAIGSIGLGKVLV. Residue Asp1850 is a topological domain, cytoplasmic. Residues 1851–1871 form a helical membrane-spanning segment; sequence ILAGYGAGVAGALVAFKVMSG. The Lumenal segment spans residues 1872–1881; the sequence is EAPSAEDLVN. Residues 1882 to 1902 traverse the membrane as a helical segment; that stretch reads LLPAILSPGALVVGVVCAAIL. Over 1903–1972 the chain is Cytoplasmic; the sequence is RRHVGPGEGA…WINEDCSTPC (70 aa). S-palmitoyl cysteine; by host attachment occurs at residues Cys1968 and Cys1972. Residues 1973–2002 lie within the membrane without spanning it; the sequence is SGSWLKDVWDWICTVLTDFKTWLQSKLLPK. Topologically, residues 2003–2989 are cytoplasmic; that stretch reads LPGVPFFSCQ…YHSLSRARPR (987 aa). Positions 2011, 2029, 2031, and 2052 each coordinate Zn(2+). Positions 2120–2208 are FKBP8-binding; the sequence is EFFTELDGVR…ASSSASQLSA (89 aa). The segment at 2120–2332 is transcriptional activation; sequence EFFTELDGVR…PIPPPRKKRT (213 aa). The tract at residues 2135-2139 is interaction with non-structural protein 4A; it reads PACRP. The segment at 2187-2220 is disordered; the sequence is KRRLARGSPPSLASSSASQLSAPSLKATCTTHHD. Residues 2189–2441 are interaction with host SKP2; the sequence is RLARGSPPSL…PCAAEESKLP (253 aa). Ser2194 carries the phosphoserine; by host; in p56 modification. The span at 2194–2211 shows a compositional bias: low complexity; sequence SPPSLASSSASQLSAPSL. 5 positions are modified to phosphoserine; by host; in p58: Ser2197, Ser2201, Ser2204, Ser2207, and Ser2210. The segment at 2210 to 2249 is ISDR; that stretch reads SLKATCTTHHDSPDADLIEANLLWRQEMGGNITRVESENK. An interaction with EIF2AK2/PKR region spans residues 2210–2275; that stretch reads SLKATCTTHH…REVSVAAEIL (66 aa). Residues 2249 to 2306 are NS4B-binding; the sequence is KVVILDSFDPLRAEEDEREVSVAAEILRKSKKFPPALPIWARPDYNPPLLESWKSPDY. Positions 2322–2325 match the SH3-binding motif; sequence PPIP. The Nuclear localization signal signature appears at 2326-2334; sequence PPRKKRTVV. A Glycyl lysine isopeptide (Lys-Gly) (interchain with G-Cter in ubiquitin) cross-link involves residue Lys2350. The segment covering 2351 to 2371 has biased composition (polar residues); it reads TFGSSGSSAVDSGTATAPPDQ. Residues 2351 to 2408 form a disordered region; that stretch reads TFGSSGSSAVDSGTATAPPDQTSDDGDKESDVESYSSMPPLEGEPGDPDLSDGSWSTV. The V3 stretch occupies residues 2354–2377; the sequence is SSGSSAVDSGTATAPPDQTSDDGD. Positions 2372–2382 are enriched in acidic residues; the sequence is TSDDGDKESDV. Ser2448 and Ser2461 each carry phosphoserine; by host. The RdRp catalytic domain occupies 2633–2751; it reads PMGFSYDTRC…ICESAGTQED (119 aa). Mg(2+)-binding residues include Asp2639, Asp2737, and Asp2738. The helical transmembrane segment at 2990–3010 threads the bilayer; sequence WFMWCLLLLSVGVGIYLLPNR.

Belongs to the hepacivirus polyprotein family. As to quaternary structure, homooligomer. Interacts with E1 (via C-terminus). Interacts with the non-structural protein 5A. Interacts (via N-terminus) with host STAT1 (via SH2 domain); this interaction results in decreased STAT1 phosphorylation and ubiquitin-mediated proteasome-dependent STAT1 degradation, leading to decreased IFN-stimulated gene transcription. Interacts with host STAT3; this interaction constitutively activates STAT3. Interacts with host LTBR receptor. Interacts with host TNFRSF1A receptor and possibly induces apoptosis. Interacts with host HNRPK. Interacts with host YWHAE. Interacts with host UBE3A/E6AP. Interacts with host DDX3X. Interacts with host APOA2. Interacts with host RXRA protein. Interacts with host SP110 isoform 3/Sp110b; this interaction sequesters the transcriptional corepressor SP110 away from the nucleus. Interacts with host CREB3 nuclear transcription protein; this interaction triggers cell transformation. Interacts with host ACY3. Interacts with host C1QR1. Interacts with host RBM24; this interaction, which enhances the interaction of the mature core protein with 5'-UTR, may inhibit viral translation and favor replication. Interacts with host EIF2AK2/PKR; this interaction induces the autophosphorylation of EIF2AK2. Part of the viral assembly initiation complex composed of NS2, E1, E2, NS3, NS4A, NS5A and the mature core protein. Forms a heterodimer with envelope glycoprotein E2. Interacts with mature core protein. Interacts with protease NS2. The heterodimer E1/E2 interacts with host CLDN1; this interaction plays a role in viral entry into host cell. Interacts with host SPSB2 (via C-terminus). Part of the viral assembly initiation complex composed of NS2, E1, E2, NS3, NS4A, NS5A and the mature core protein. Interacts with host NEURL3; this interaction prevents E1 binding to glycoprotein E2. In terms of assembly, forms a heterodimer with envelope glycoprotein E1. Interacts with host CD81 and SCARB1 receptors; these interactions play a role in viral entry into host cell. Interacts with host EIF2AK2/PKR; this interaction inhibits EIF2AK2 and probably allows the virus to evade the innate immune response. Interacts with host CD209/DC-SIGN and CLEC4M/DC-SIGNR. Interact with host SPCS1; this interaction is essential for viral particle assembly. Interacts with protease NS2. The heterodimer E1/E2 interacts with host CLDN1; this interaction plays a role in viral entry into host cell. Part of the viral assembly initiation complex composed of NS2, E1, E2, NS3, NS4A, NS5A and the mature core protein. Interacts with host SLC3A2/4F2hc; the interaction may facilitate viral entry into host cell. Interacts with human PLSCR1. As to quaternary structure, homohexamer. Homoheptamer. Interacts with protease NS2. Homodimer. Interacts with host SPCS1; this interaction is essential for viral particle assembly. Interacts with envelope glycoprotein E1. Interacts with envelope glycoprotein E2. Interacts with viroporin p7. Interacts with serine protease/helicase NS3. Part of the replication complex composed of NS2, NS3, NS4A, NS4B, NS5A and the RNA-directed RNA polymerase embedded in an ER-derived membranous web. Part of the viral assembly initiation complex composed of NS2, E1, E2, NS3, NS4A, NS5A and the mature core protein. In terms of assembly, interacts with protease NS2. Interacts with non-structural protein 4A; this interaction stabilizes the folding of NS3 serine protease. NS3-NS4A interaction is essential for NS3 activation and allows membrane anchorage of the latter. NS3/NS4A complex also prevents phosphorylation of host IRF3, thus preventing the establishment of dsRNA induced antiviral state. Interacts with host MAVS; this interaction leads to the cleavage and inhibition of host MAVS. Interacts with host TICAM1; this interaction leads to the cleavage and inhibition of host TICAM1. Interacts with host TANK-binding kinase/TBK1; this interaction results in the inhibition of the association between TBK1 and IRF3, which leads to the inhibition of IRF3 activation. Interacts with host RBM24. Part of the replication complex composed of NS2, NS3, NS4A, NS4B, NS5A and the RNA-directed RNA polymerase embedded in an ER-derived membranous web. Part of the viral assembly initiation complex composed of NS2, E1, E2, NS3, NS4A, NS5A and the mature core protein. As to quaternary structure, interacts with NS3 serine protease; this interaction stabilizes the folding of NS3 serine protease. NS3-NS4A interaction is essential for NS3 activation and allows membrane anchorage of the latter. Interacts with non-structural protein 5A (via N-terminus). Part of the replication complex composed of NS2, NS3, NS4A, NS4B, NS5A and the RNA-directed RNA polymerase embedded in an ER-derived membranous web. Part of the viral assembly initiation complex composed of NS2, E1, E2, NS3, NS4A, NS5A and the mature core protein. Homomultimer. Interacts with non-structural protein NS5A. Interacts with host PLA2G4C; this interaction likely initiates the recruitment of replication complexes to lipid droplets. Interacts with host STING; this interaction disrupts the interaction between STING and TBK1 thereby suppressing the interferon signaling. Part of the replication complex composed of NS2, NS3, NS4A, NS4B, NS5A and the RNA-directed RNA polymerase embedded in an ER-derived membranous web. In terms of assembly, monomer. Homodimer; dimerization is required for RNA-binding. Interacts with the mature core protein. Interacts (via N-terminus) with non-structural protein 4A. Interacts with non-structural protein 4B. Interacts (via region D2) with RNA-directed RNA polymerase. Part of the viral assembly initiation complex composed of NS2, E1, E2, NS3, NS4A, NS5A and the mature core protein. Part of the replication complex composed of NS2, NS3, NS4A, NS4B, NS5A and the RNA-directed RNA polymerase embedded in an ER-derived membranous web. Interacts with host GRB2. Interacts with host BIN1. Interacts with host PIK3R1. Interacts with host SRCAP. Interacts with host FKBP8. Interacts (via C-terminus) with host VAPB (via MSP domain). Interacts with host EIF2AK2/PKR; this interaction leads to disruption of EIF2AK2 dimerization by NS5A and probably allows the virus to evade the innate immune response. Interacts (via N-terminus) with host PACSIN2 (via N-terminus); this interaction attenuates protein kinase C alpha-mediated phosphorylation of PACSIN2 by disrupting the interaction between PACSIN2 and PRKCA. Interacts (via N-terminus) with host SRC kinase (via SH2 domain). Interacts with most Src-family kinases. Interacts with host IFI27 and SKP2; promotes the ubiquitin-mediated proteasomal degradation of NS5A. Interacts with host GPS2. Interacts with host TNFRSF21; this interaction allows the modulation by the virus of JNK, p38 MAPK, STAT3, and Akt signaling pathways in a DR6-dependent manner. Interacts (via N-terminus) with host CIDEB (via N-terminus); this interaction seems to regulate the association of HCV particles with APOE. Interacts with host CHKA/Choline Kinase-alpha; CHKA bridges host PI4KA and NS5A and potentiates NS5A-stimulated PI4KA activity, which then facilitates the targeting of the ternary complex to the ER for viral replication. Interacts with host SPSB2 (via C-terminus); this interaction targets NS5A for ubiquitination and degradation. Interacts with host RAB18; this interaction may promote the association of NS5A and other replicase components with lipid droplets. Interacts (via region D2) with host PPIA/CYPA; the interaction stimulates RNA-binding ability of NS5A and is dependent on the peptidyl-prolyl cis-trans isomerase activity of PPIA/CYPA. Interacts with host TRIM14; this interaction induces the degradation of NS5A. As to quaternary structure, homooligomer. Interacts with non-structural protein 5A. Interacts with host VAPB. Interacts with host PRK2/PKN2. Interacts with host HNRNPA1 and SEPT6; these interactions facilitate viral replication. Part of the replication complex composed of NS2, NS3, NS4A, NS4B, NS5A and the RNA-directed RNA polymerase. Zn(2+) is required as a cofactor. Requires Mg(2+) as cofactor. Post-translationally, specific enzymatic cleavages in vivo yield mature proteins. The structural proteins, core, E1, E2 and p7 are produced by proteolytic processing by host signal peptidases. The core protein precursor is synthesized as a 23 kDa, which is retained in the ER membrane through the hydrophobic signal peptide. Cleavage by the signal peptidase releases the 21 kDa mature core protein. The cleavage of the core protein precursor occurs between aminoacids 176 and 188 but the exact cleavage site is not known. Some degraded forms of the core protein appear as well during the course of infection. The other proteins (p7, NS2, NS3, NS4A, NS4B, NS5A and NS5B) are cleaved by the viral proteases. Autoprocessing between NS2 and NS3 is mediated by the NS2 cysteine protease catalytic domain and regulated by the NS3 N-terminal domain. Phosphorylated by host PKC and PKA. In terms of processing, ubiquitinated; mediated by UBE3A and leading to core protein subsequent proteasomal degradation. Post-translationally, highly N-glycosylated. Palmitoylation is required for NS2/3 autoprocessing and E2 recruitment to membranes. In terms of processing, palmitoylated. This modification may play a role in its polymerization or in protein-protein interactions. Post-translationally, phosphorylated on serines in a basal form termed p56. p58 is a hyperphosphorylated form of p56. p56 and p58 coexist in the cell in roughly equivalent amounts. Hyperphosphorylation is dependent on the presence of NS4A. Host CSNK1A1/CKI-alpha or RPS6KB1 kinases may be responsible for NS5A phosphorylation. Tyrosine phosphorylation is essential for the interaction with host SRC. In terms of processing, ubiquitinated. Ubiquitination, most probably at Lys-2350, mediated by host IFI27 and SKP2 leads to proteasomal degradation, restricting viral infection. Ubiquitination by host TRIM22 leads to interruption of viral replication. Post-translationally, the N-terminus is phosphorylated by host PRK2/PKN2.

It localises to the host endoplasmic reticulum membrane. It is found in the host mitochondrion membrane. The protein localises to the virion. The protein resides in the host cytoplasm. Its subcellular location is the host nucleus. It localises to the host lipid droplet. It is found in the virion membrane. The protein localises to the host mitochondrion. The protein resides in the host cell membrane. Its subcellular location is the host perinuclear region. The enzyme catalyses Hydrolysis of four peptide bonds in the viral precursor polyprotein, commonly with Asp or Glu in the P6 position, Cys or Thr in P1 and Ser or Ala in P1'.. The catalysed reaction is a ribonucleoside 5'-triphosphate + H2O = a ribonucleoside 5'-diphosphate + phosphate + H(+). It catalyses the reaction ATP + H2O = ADP + phosphate + H(+). It carries out the reaction RNA(n) + a ribonucleoside 5'-triphosphate = RNA(n+1) + diphosphate. With respect to regulation, inhibited by the antiviral drug hexamethylene amiloride. Inhibition by amantadine appears to be genotype-dependent. Also inhibited by long-alkyl-chain iminosugar derivatives. Its activity is regulated as follows. Activity is up-regulated by PRK2/PKN2-mediated phosphorylation. Packages viral RNA to form a viral nucleocapsid, and promotes virion budding. Participates in the viral particle production as a result of its interaction with the non-structural protein 5A. Binds RNA and may function as a RNA chaperone to induce the RNA structural rearrangements taking place during virus replication. Modulates viral translation initiation by interacting with viral IRES and 40S ribosomal subunit. Affects various cell signaling pathways, host immunity and lipid metabolism. Prevents the establishment of cellular antiviral state by blocking the interferon-alpha/beta (IFN-alpha/beta) and IFN-gamma signaling pathways and by blocking the formation of phosphorylated STAT1 and promoting ubiquitin-mediated proteasome-dependent degradation of STAT1. Activates STAT3 leading to cellular transformation. Regulates the activity of cellular genes, including c-myc and c-fos. May repress the promoter of p53, and sequester CREB3 and SP110 isoform 3/Sp110b in the cytoplasm. Represses cell cycle negative regulating factor CDKN1A, thereby interrupting an important check point of normal cell cycle regulation. Targets transcription factors involved in the regulation of inflammatory responses and in the immune response: suppresses TNF-induced NF-kappa-B activation, and activates AP-1. Binds to dendritic cells (DCs) via C1QR1, resulting in down-regulation of T-lymphocytes proliferation. Alters lipid metabolism by interacting with hepatocellular proteins involved in lipid accumulation and storage. Induces up-regulation of FAS promoter activity, and thereby contributes to the increased triglyceride accumulation in hepatocytes (steatosis). In terms of biological role, forms a heterodimer with envelope glycoprotein E2, which mediates virus attachment to the host cell, virion internalization through clathrin-dependent endocytosis and fusion with host membrane. Fusion with the host cell is most likely mediated by both E1 and E2, through conformational rearrangements of the heterodimer required for fusion rather than a classical class II fusion mechanism. E1/E2 heterodimer binds host apolipoproteins such as APOB and ApoE thereby forming a lipo-viro-particle (LVP). APOE associated to the LVP allows the initial virus attachment to cell surface receptors such as the heparan sulfate proteoglycans (HSPGs), syndecan-1 (SDC1), syndecan-1 (SDC2), the low-density lipoprotein receptor (LDLR) and scavenger receptor class B type I (SCARB1). The cholesterol transfer activity of SCARB1 allows E2 exposure and binding of E2 to SCARB1 and the tetraspanin CD81. E1/E2 heterodimer binding on CD81 activates the epithelial growth factor receptor (EGFR) signaling pathway. Diffusion of the complex E1-E2-EGFR-SCARB1-CD81 to the cell lateral membrane allows further interaction with Claudin 1 (CLDN1) and occludin (OCLN) to finally trigger HCV entry. Functionally, forms a heterodimer with envelope glycoprotein E1, which mediates virus attachment to the host cell, virion internalization through clathrin-dependent endocytosis and fusion with host membrane. Fusion with the host cell is most likely mediated by both E1 and E2, through conformational rearrangements of the heterodimer required for fusion rather than a classical class II fusion mechanism. The interaction between envelope glycoprotein E2 and host apolipoprotein E/APOE allows the proper assembly, maturation and infectivity of the viral particles. This interaction is probably promoted via the up-regulation of cellular autophagy by the virus. E1/E2 heterodimer binds host apolipoproteins such as APOB and APOE thereby forming a lipo-viro-particle (LVP). APOE associated to the LVP allows the initial virus attachment to cell surface receptors such as the heparan sulfate proteoglycans (HSPGs), syndecan-1 (SDC1), syndecan-1 (SDC2), the low-density lipoprotein receptor (LDLR) and scavenger receptor class B type I (SCARB1). The cholesterol transfer activity of SCARB1 allows E2 exposure and binding of E2 to SCARB1 and the tetraspanin CD81. E1/E2 heterodimer binding on CD81 activates the epithelial growth factor receptor (EGFR) signaling pathway. Diffusion of the complex E1-E2-EGFR-SCARB1-CD81 to the cell lateral membrane allows further interaction with Claudin 1 (CLDN1) and occludin (OCLN) to finally trigger HCV entry. Inhibits host EIF2AK2/PKR activation, preventing the establishment of an antiviral state. Viral ligand for CD209/DC-SIGN and CLEC4M/DC-SIGNR, which are respectively found on dendritic cells (DCs), and on liver sinusoidal endothelial cells and macrophage-like cells of lymph node sinuses. These interactions allow the capture of circulating HCV particles by these cells and subsequent facilitated transmission to permissive cells such as hepatocytes and lymphocyte subpopulations. The interaction between E2 and host amino acid transporter complex formed by SLC3A2 and SLC7A5/LAT1 may facilitate viral entry into host cell. Its function is as follows. Ion channel protein that acts as a viroporin and plays an essential role in the assembly, envelopment and secretion of viral particles. Regulates the host cell secretory pathway, which induces the intracellular retention of viral glycoproteins and favors assembly of viral particles. Creates a pore in acidic organelles and releases Ca(2+) and H(+) in the cytoplasm of infected cells, leading to a productive viral infection. High levels of cytoplasmic Ca(2+) may trigger membrane trafficking and transport of viral ER-associated proteins to viroplasms, sites of viral genome replication. This ionic imbalance induces the assembly of the inflammasome complex, which triggers the maturation of pro-IL-1beta into IL-1beta through the action of caspase-1. Targets also host mitochondria and induces mitochondrial depolarization. In addition of its role as a viroporin, acts as a lipid raft adhesion factor. Cysteine protease required for the proteolytic auto-cleavage between the non-structural proteins NS2 and NS3. The N-terminus of NS3 is required for the function of NS2 protease (active region NS2-3). Promotes the initiation of viral particle assembly by mediating the interaction between structural and non-structural proteins. In terms of biological role, displays three enzymatic activities: serine protease with a chymotrypsin-like fold, NTPase and RNA helicase. NS3 serine protease, in association with NS4A, is responsible for the cleavages of NS3-NS4A, NS4A-NS4B, NS4B-NS5A and NS5A-NS5B. The NS3/NS4A complex prevents phosphorylation of host IRF3, thus preventing the establishment of dsRNA induced antiviral state. The NS3/NS4A complex induces host amino acid transporter component SLC3A2, thus contributing to HCV propagation. NS3 RNA helicase binds to RNA and unwinds both dsDNA and dsRNA in the 3' to 5' direction, and likely resolves RNA complicated stable secondary structures in the template strand. Binds a single ATP and catalyzes the unzipping of a single base pair of dsRNA. Inhibits host antiviral proteins TBK1 and IRF3 thereby preventing the establishment of an antiviral state. Cleaves host MAVS/CARDIF thereby preventing the establishment of an antiviral state. Cleaves host TICAM1/TRIF, thereby disrupting TLR3 signaling and preventing the establishment of an antiviral state. Functionally, induces a specific membrane alteration that serves as a scaffold for the virus replication complex. This membrane alteration gives rise to the so-called ER-derived membranous web that contains the replication complex. NS4B self-interaction contributes to its function in membranous web formation. Promotes host TRIF protein degradation in a CASP8-dependent manner thereby inhibiting host TLR3-mediated interferon signaling. Disrupts the interaction between STING and TBK1 contributing to the inhibition of interferon signaling. Its function is as follows. Phosphorylated protein that is indispensable for viral replication and assembly. Both hypo- and hyperphosphorylated states are required for the viral life cycle. The hyperphosphorylated form of NS5A is an inhibitor of viral replication. Involved in RNA-binding and especially in binding to the viral genome. Zinc is essential for RNA-binding. Participates in the viral particle production as a result of its interaction with the mature viral core protein. Its interaction with host VAPB may target the viral replication complex to vesicles. Down-regulates viral IRES translation initiation. Mediates interferon resistance, presumably by interacting with and inhibiting host EIF2AK2/PKR. Prevents BIN1-induced apoptosis. Acts as a transcriptional activator of some host genes important for viral replication when localized in the nucleus. Via the interaction with host PACSIN2, modulates lipid droplet formation in order to promote virion assembly. Modulates TNFRSF21/DR6 signaling pathway for viral propagation. RNA-dependent RNA polymerase that performs primer-template recognition and RNA synthesis during viral replication. Initiates RNA transcription/replication at a flavin adenine dinucleotide (FAD), resulting in a 5'- FAD cap on viral RNAs. In this way, recognition of viral 5' RNA by host pattern recognition receptors can be bypassed, thereby evading activation of antiviral pathways. In terms of biological role, peptide cofactor which forms a non-covalent complex with the N-terminal of NS3 serine protease. The NS3/NS4A complex prevents phosphorylation of host IRF3, thus preventing the establishment of dsRNA induced antiviral state. The NS3/NS4A complex induces host amino acid transporter component SLC3A2, thus contributing to HCV propagation. The polypeptide is Genome polyprotein (Homo sapiens (Human)).